Consider the following 471-residue polypeptide: Argininosuccinate lyase (471 aa).

This sequence belongs to the lyase 1 family. Argininosuccinate lyase subfamily.

It is found in the cytoplasm. It carries out the reaction 2-(N(omega)-L-arginino)succinate = fumarate + L-arginine. It functions in the pathway amino-acid biosynthesis; L-arginine biosynthesis; L-arginine from L-ornithine and carbamoyl phosphate: step 3/3. This Cereibacter sphaeroides (strain ATCC 17025 / ATH 2.4.3) (Rhodobacter sphaeroides) protein is Argininosuccinate lyase.